The chain runs to 183 residues: Outer membrane protein H.8 (183 aa).

A signal peptide spans 1-17; sequence MKAYLALISAAVIGLAA. A lipid anchor (N-palmitoyl cysteine) is attached at cysteine 18. Cysteine 18 carries the S-diacylglycerol cysteine lipid modification. A disordered region spans residues 27–51; that stretch reads AEATPAGEAPASEAPAAEAAPADAA. The region spanning 57–183 is the Plastocyanin-like domain; that stretch reads GNCAATVESN…LMNGKVTLVD (127 aa). Residues histidine 102, cysteine 166, histidine 171, and methionine 175 each contribute to the Cu cation site.

Requires Cu cation as cofactor.

The protein resides in the cell outer membrane. This is Outer membrane protein H.8 from Neisseria gonorrhoeae.